Reading from the N-terminus, the 363-residue chain is Phosphoserine aminotransferase (363 aa).

R42 lines the L-glutamate pocket. Pyridoxal 5'-phosphate contacts are provided by residues 76-77, W101, T151, D170, and Q193; that span reads AS. K194 is modified (N6-(pyridoxal phosphate)lysine). A pyridoxal 5'-phosphate-binding site is contributed by 234–235; sequence NT.

The protein belongs to the class-V pyridoxal-phosphate-dependent aminotransferase family. SerC subfamily. In terms of assembly, homodimer. The cofactor is pyridoxal 5'-phosphate.

It localises to the cytoplasm. It catalyses the reaction O-phospho-L-serine + 2-oxoglutarate = 3-phosphooxypyruvate + L-glutamate. It carries out the reaction 4-(phosphooxy)-L-threonine + 2-oxoglutarate = (R)-3-hydroxy-2-oxo-4-phosphooxybutanoate + L-glutamate. It participates in amino-acid biosynthesis; L-serine biosynthesis; L-serine from 3-phospho-D-glycerate: step 2/3. Functionally, catalyzes the reversible conversion of 3-phosphohydroxypyruvate to phosphoserine and of 3-hydroxy-2-oxo-4-phosphonooxybutanoate to phosphohydroxythreonine. This Listeria innocua serovar 6a (strain ATCC BAA-680 / CLIP 11262) protein is Phosphoserine aminotransferase.